Here is a 605-residue protein sequence, read N- to C-terminus: Elongation factor 4 (605 aa).

Residues 9-192 form the tr-type G domain; it reads GMIRNFCIIA…AIVARVPAPA (184 aa). GTP contacts are provided by residues 21–26 and 139–142; these read DHGKST and NKID.

This sequence belongs to the TRAFAC class translation factor GTPase superfamily. Classic translation factor GTPase family. LepA subfamily.

It localises to the cell inner membrane. The enzyme catalyses GTP + H2O = GDP + phosphate + H(+). In terms of biological role, required for accurate and efficient protein synthesis under certain stress conditions. May act as a fidelity factor of the translation reaction, by catalyzing a one-codon backward translocation of tRNAs on improperly translocated ribosomes. Back-translocation proceeds from a post-translocation (POST) complex to a pre-translocation (PRE) complex, thus giving elongation factor G a second chance to translocate the tRNAs correctly. Binds to ribosomes in a GTP-dependent manner. The protein is Elongation factor 4 of Chlorobaculum tepidum (strain ATCC 49652 / DSM 12025 / NBRC 103806 / TLS) (Chlorobium tepidum).